Reading from the N-terminus, the 296-residue chain is Polyamine aminopropyltransferase (296 aa).

Residues 16-251 form the PABS domain; it reads HLWYFEYYTG…GMWSYTFASK (236 aa). Q46 serves as a coordination point for S-methyl-5'-thioadenosine. 2 residues coordinate spermidine: H77 and D101. S-methyl-5'-thioadenosine-binding positions include E121 and 152 to 153; that span reads NG. The active-site Proton acceptor is the D170. 170–173 serves as a coordination point for spermidine; that stretch reads DSTD.

This sequence belongs to the spermidine/spermine synthase family. Homotetramer.

Its subcellular location is the cytoplasm. It catalyses the reaction S-adenosyl 3-(methylsulfanyl)propylamine + putrescine = S-methyl-5'-thioadenosine + spermidine + H(+). It participates in amine and polyamine biosynthesis; spermidine biosynthesis; spermidine from putrescine: step 1/1. Strongly inhibited by S-adenosyl-1,8-diamino-3-thiooctane. In terms of biological role, catalyzes the irreversible transfer of a propylamine group from the amino donor S-adenosylmethioninamine (decarboxy-AdoMet) to putrescine (1,4-diaminobutane) to yield spermidine. It has lower affinity and lower activity towards 1,3-diaminopropane, cadaverine (1,5-diaminopentane), agmatine, norspermidine and spermidine (in vitro). The polypeptide is Polyamine aminopropyltransferase (Thermotoga maritima (strain ATCC 43589 / DSM 3109 / JCM 10099 / NBRC 100826 / MSB8)).